Here is a 164-residue protein sequence, read N- to C-terminus: Large ribosomal subunit protein uL10 (164 aa).

The protein belongs to the universal ribosomal protein uL10 family. In terms of assembly, part of the ribosomal stalk of the 50S ribosomal subunit. The N-terminus interacts with L11 and the large rRNA to form the base of the stalk. The C-terminus forms an elongated spine to which L12 dimers bind in a sequential fashion forming a multimeric L10(L12)X complex.

Its function is as follows. Forms part of the ribosomal stalk, playing a central role in the interaction of the ribosome with GTP-bound translation factors. In Aliivibrio fischeri (strain MJ11) (Vibrio fischeri), this protein is Large ribosomal subunit protein uL10.